Reading from the N-terminus, the 280-residue chain is Diaminopimelate epimerase (280 aa).

Substrate-binding residues include Asn-15 and Asn-66. Cys-75 acts as the Proton donor in catalysis. Substrate-binding positions include 76-77 (GN), Asn-163, Asn-196, and 214-215 (ER). Cys-223 functions as the Proton acceptor in the catalytic mechanism. 224 to 225 (GT) contributes to the substrate binding site.

Belongs to the diaminopimelate epimerase family. In terms of assembly, homodimer.

It localises to the cytoplasm. It carries out the reaction (2S,6S)-2,6-diaminopimelate = meso-2,6-diaminopimelate. Its pathway is amino-acid biosynthesis; L-lysine biosynthesis via DAP pathway; DL-2,6-diaminopimelate from LL-2,6-diaminopimelate: step 1/1. Its function is as follows. Catalyzes the stereoinversion of LL-2,6-diaminopimelate (L,L-DAP) to meso-diaminopimelate (meso-DAP), a precursor of L-lysine and an essential component of the bacterial peptidoglycan. The polypeptide is Diaminopimelate epimerase (Phocaeicola vulgatus (strain ATCC 8482 / DSM 1447 / JCM 5826 / CCUG 4940 / NBRC 14291 / NCTC 11154) (Bacteroides vulgatus)).